A 265-amino-acid polypeptide reads, in one-letter code: Translation initiation factor 2 subunit alpha (265 aa).

Residues 12–83 (GELIIGTVYK…KKGHVDASLK (72 aa)) enclose the S1 motif domain.

It belongs to the eIF-2-alpha family. As to quaternary structure, heterotrimer composed of an alpha, a beta and a gamma chain.

Its function is as follows. eIF-2 functions in the early steps of protein synthesis by forming a ternary complex with GTP and initiator tRNA. The polypeptide is Translation initiation factor 2 subunit alpha (Methanobrevibacter smithii (strain ATCC 35061 / DSM 861 / OCM 144 / PS)).